The sequence spans 97 residues: ATP-dependent Clp protease adapter protein ClpS (97 aa).

Belongs to the ClpS family. Binds to the N-terminal domain of the chaperone ClpA.

In terms of biological role, involved in the modulation of the specificity of the ClpAP-mediated ATP-dependent protein degradation. The chain is ATP-dependent Clp protease adapter protein ClpS from Nautilia profundicola (strain ATCC BAA-1463 / DSM 18972 / AmH).